The chain runs to 1350 residues: ABC transporter C family member 13 (1350 aa).

In terms of domain architecture, ABC transmembrane type-1 1 spans 107–390; the sequence is NKKSIFIVIL…LPEAIHNLLG (284 aa). The next 4 membrane-spanning stretches (helical) occupy residues 111-131, 143-163, 215-235, and 240-260; these read IFIV…LKYF, TFLT…SYTL, IGLF…FPIQ, and LALL…VMII. The interval 462–481 is disordered; the sequence is EKSEEEYETTTTTTDDNNNN. A compositionally biased stretch (low complexity) spans 470–481; sequence TTTTTTDDNNNN. Residues 473–693 form the ABC transporter 1 domain; the sequence is TTTDDNNNNN…IDFESIMKTK (221 aa). 505–512 is an ATP binding site; sequence GVVGSGKT. In terms of domain architecture, ABC transmembrane type-1 2 spans 774 to 1061; it reads KHGSSTFFFI…FVELEVKMNS (288 aa). A run of 6 helical transmembrane segments spans residues 776-796, 816-836, 887-907, 909-929, 1003-1023, and 1029-1049; these read GSST…QAIF, DSFY…TLVI, IDLL…TVVF, ICVM…LIIV, IGVR…FFSL, and GFSV…NWAV. In terms of domain architecture, ABC transporter 2 spans 1103–1337; it reads IEFRDVEIRY…KNSKFSKLVK (235 aa). 1137–1144 provides a ligand contact to ATP; the sequence is GRTGAGKS.

It belongs to the ABC transporter superfamily. ABCC family. Conjugate transporter (TC 3.A.1.208) subfamily.

The protein localises to the membrane. The protein is ABC transporter C family member 13 (abcC13) of Dictyostelium discoideum (Social amoeba).